The chain runs to 328 residues: Homeobox protein Hox-C13 (328 aa).

Residues 23-48 (AAESGSGGGGGGGGAGGAGGGCSGAS) are disordered. Positions 27–45 (GSGGGGGGGGAGGAGGGCS) are enriched in gly residues. Positions 258–317 (GRKKRVPYTKVQLKELEKEYAASKFITKEKRRRISATTNLSERQVTIWFQNRRVKEKKVV) form a DNA-binding region, homeobox.

Belongs to the Abd-B homeobox family. As to expression, expressed in differentiating keratinocytes. In the hair follicle lower matrix, expressed in all 3 hair shaft-forming compartments, i.e. cuticle, cortex and medulla. Expression stops sharply at the boundary with the germinal matrix compartment.

Its subcellular location is the nucleus. Functionally, transcription factor which plays a role in hair follicle differentiation. Regulates FOXQ1 expression and that of other hair-specific genes. The polypeptide is Homeobox protein Hox-C13 (Hoxc13) (Mus musculus (Mouse)).